Here is a 514-residue protein sequence, read N- to C-terminus: Transcription termination factor Rho (514 aa).

The disordered stretch occupies residues 25 to 52; it reads EPSSTPGPARNARRSNRRMRHPDKDVDK. A compositionally biased stretch (basic residues) spans 35 to 45; that stretch reads NARRSNRRMRH. Positions 141–216 constitute a Rho RNA-BD domain; it reads LMYGEGTLEI…LRIEAINHAD (76 aa). Residues 259-264, 271-276, and Arg-302 each bind ATP; these read GFGQRG and RAGKTM.

It belongs to the Rho family. Homohexamer. The homohexamer assembles into an open ring structure.

Functionally, facilitates transcription termination by a mechanism that involves Rho binding to the nascent RNA, activation of Rho's RNA-dependent ATPase activity, and release of the mRNA from the DNA template. This chain is Transcription termination factor Rho, found in Rhodopirellula baltica (strain DSM 10527 / NCIMB 13988 / SH1).